A 334-amino-acid polypeptide reads, in one-letter code: Beta-ketoacyl-[acyl-carrier-protein] synthase III (334 aa).

Active-site residues include cysteine 116 and histidine 256. The interval 257-261 is ACP-binding; that stretch reads QANLR. Asparagine 286 is a catalytic residue.

This sequence belongs to the thiolase-like superfamily. FabH family. In terms of assembly, homodimer.

The protein resides in the cytoplasm. The enzyme catalyses malonyl-[ACP] + acetyl-CoA + H(+) = 3-oxobutanoyl-[ACP] + CO2 + CoA. The protein operates within lipid metabolism; fatty acid biosynthesis. In terms of biological role, catalyzes the condensation reaction of fatty acid synthesis by the addition to an acyl acceptor of two carbons from malonyl-ACP. Catalyzes the first condensation reaction which initiates fatty acid synthesis and may therefore play a role in governing the total rate of fatty acid production. Possesses both acetoacetyl-ACP synthase and acetyl transacylase activities. Its substrate specificity determines the biosynthesis of branched-chain and/or straight-chain of fatty acids. The protein is Beta-ketoacyl-[acyl-carrier-protein] synthase III of Phocaeicola vulgatus (strain ATCC 8482 / DSM 1447 / JCM 5826 / CCUG 4940 / NBRC 14291 / NCTC 11154) (Bacteroides vulgatus).